The following is a 185-amino-acid chain: Ribosome-recycling factor (185 aa).

The protein belongs to the RRF family.

It localises to the cytoplasm. Its function is as follows. Responsible for the release of ribosomes from messenger RNA at the termination of protein biosynthesis. May increase the efficiency of translation by recycling ribosomes from one round of translation to another. The protein is Ribosome-recycling factor of Citrifermentans bemidjiense (strain ATCC BAA-1014 / DSM 16622 / JCM 12645 / Bem) (Geobacter bemidjiensis).